The following is a 343-amino-acid chain: UDP-3-O-acylglucosamine N-acyltransferase (343 aa).

His-239 acts as the Proton acceptor in catalysis.

Belongs to the transferase hexapeptide repeat family. LpxD subfamily. In terms of assembly, homotrimer.

The catalysed reaction is a UDP-3-O-[(3R)-3-hydroxyacyl]-alpha-D-glucosamine + a (3R)-hydroxyacyl-[ACP] = a UDP-2-N,3-O-bis[(3R)-3-hydroxyacyl]-alpha-D-glucosamine + holo-[ACP] + H(+). It participates in bacterial outer membrane biogenesis; LPS lipid A biosynthesis. Its function is as follows. Catalyzes the N-acylation of UDP-3-O-acylglucosamine using 3-hydroxyacyl-ACP as the acyl donor. Is involved in the biosynthesis of lipid A, a phosphorylated glycolipid that anchors the lipopolysaccharide to the outer membrane of the cell. In Vibrio parahaemolyticus serotype O3:K6 (strain RIMD 2210633), this protein is UDP-3-O-acylglucosamine N-acyltransferase.